The following is a 261-amino-acid chain: Segregation and condensation protein A (261 aa).

This sequence belongs to the ScpA family. As to quaternary structure, component of a cohesin-like complex composed of ScpA, ScpB and the Smc homodimer, in which ScpA and ScpB bind to the head domain of Smc. The presence of the three proteins is required for the association of the complex with DNA.

It localises to the cytoplasm. Its function is as follows. Participates in chromosomal partition during cell division. May act via the formation of a condensin-like complex containing Smc and ScpB that pull DNA away from mid-cell into both cell halves. The polypeptide is Segregation and condensation protein A (Ligilactobacillus salivarius (strain UCC118) (Lactobacillus salivarius)).